A 677-amino-acid chain; its full sequence is DNA ligase (677 aa).

Residues 38-42 (DSVYD), 87-88 (SL), and Glu119 each bind NAD(+). Lys121 serves as the catalytic N6-AMP-lysine intermediate. Positions 142, 179, 296, and 320 each coordinate NAD(+). Positions 414, 417, 432, and 438 each coordinate Zn(2+). The BRCT domain maps to 595 to 677 (VVKSEIAGKT…LKLLKSKGVF (83 aa)).

The protein belongs to the NAD-dependent DNA ligase family. LigA subfamily. The cofactor is Mg(2+). Requires Mn(2+) as cofactor.

It catalyses the reaction NAD(+) + (deoxyribonucleotide)n-3'-hydroxyl + 5'-phospho-(deoxyribonucleotide)m = (deoxyribonucleotide)n+m + AMP + beta-nicotinamide D-nucleotide.. Functionally, DNA ligase that catalyzes the formation of phosphodiester linkages between 5'-phosphoryl and 3'-hydroxyl groups in double-stranded DNA using NAD as a coenzyme and as the energy source for the reaction. It is essential for DNA replication and repair of damaged DNA. This Coxiella burnetii (strain CbuG_Q212) (Coxiella burnetii (strain Q212)) protein is DNA ligase.